We begin with the raw amino-acid sequence, 213 residues long: Orotate phosphoribosyltransferase (213 aa).

Position 26 (K26) interacts with 5-phospho-alpha-D-ribose 1-diphosphate. 34-35 provides a ligand contact to orotate; it reads FF. 5-phospho-alpha-D-ribose 1-diphosphate is bound by residues 72–73, R99, K100, K103, H105, and 124–132; these read YK and DDVITAGTA. 2 residues coordinate orotate: T128 and R156.

This sequence belongs to the purine/pyrimidine phosphoribosyltransferase family. PyrE subfamily. As to quaternary structure, homodimer. Requires Mg(2+) as cofactor.

It catalyses the reaction orotidine 5'-phosphate + diphosphate = orotate + 5-phospho-alpha-D-ribose 1-diphosphate. It functions in the pathway pyrimidine metabolism; UMP biosynthesis via de novo pathway; UMP from orotate: step 1/2. Functionally, catalyzes the transfer of a ribosyl phosphate group from 5-phosphoribose 1-diphosphate to orotate, leading to the formation of orotidine monophosphate (OMP). In Vibrio vulnificus (strain YJ016), this protein is Orotate phosphoribosyltransferase.